The sequence spans 123 residues: ATP synthase epsilon chain (123 aa).

The protein belongs to the ATPase epsilon chain family. F-type ATPases have 2 components, CF(1) - the catalytic core - and CF(0) - the membrane proton channel. CF(1) has five subunits: alpha(3), beta(3), gamma(1), delta(1), epsilon(1). CF(0) has three main subunits: a, b and c.

It localises to the cell inner membrane. Produces ATP from ADP in the presence of a proton gradient across the membrane. The chain is ATP synthase epsilon chain from Helicobacter pylori (strain P12).